A 1132-amino-acid polypeptide reads, in one-letter code: NUT family member 1 (1132 aa).

Disordered regions lie at residues M1–S56, A337–P365, L383–Y405, E476–R584, R693–D714, D873–S892, and P922–L1017. Residues A21–D36 show a composition bias toward pro residues. Positions A337–Q352 are enriched in basic residues. Over residues E395 to M404 the composition is skewed to acidic residues. 3 stretches are compositionally biased toward polar residues: residues S487–G497, M697–S706, and E883–S892. The span at G932–K942 shows a compositional bias: basic and acidic residues. Positions Q950 to G971 are enriched in polar residues. A phosphoserine mark is found at S1026, S1029, and S1031. Positions S1031 to Q1132 are disordered. Position 1046 is an N5-methylglutamine (Q1046). Over residues G1123 to Q1132 the composition is skewed to basic residues.

This sequence belongs to the NUT family. Methylated at Gln-1046 by N6AMT1. Post-translationally, phosphorylation on Ser-1026, Ser-1029 or Ser-1031 is important for cytoplasmic export. As to expression, specifically expressed in testis.

It is found in the cytoplasm. The protein resides in the nucleus. Plays a role in the regulation of proliferation. Regulates TERT expression by modulating SP1 binding to TERT promoter binding sites. This Homo sapiens (Human) protein is NUT family member 1.